The following is a 419-amino-acid chain: Carboxypeptidase A1 (419 aa).

The signal sequence occupies residues 1–16 (MRGLLVLSVLLGAVFG). The propeptide at 17–110 (KEDFVGHQVL…QEQMFAFRSR (94 aa)) is activation peptide. Positions 121–414 (TYHTLEEIYD…LALLTIMEHT (294 aa)) constitute a Peptidase M14 domain. His-179 and Glu-182 together coordinate Zn(2+). Residues 179 to 182 (HSRE), Arg-237, and 254 to 255 (NR) each bind substrate. Residues Cys-248 and Cys-271 are joined by a disulfide bond. Residue His-306 participates in Zn(2+) binding. Substrate is bound by residues 307–308 (SY) and Tyr-358. Residue Glu-380 is the Proton donor/acceptor of the active site.

It belongs to the peptidase M14 family. In terms of assembly, monomer. May form a complex with proelastase 2. Zn(2+) serves as cofactor.

Its subcellular location is the secreted. It carries out the reaction Release of a C-terminal amino acid, but little or no action with -Asp, -Glu, -Arg, -Lys or -Pro.. The catalysed reaction is leukotriene C4 + H2O = leukotriene F4 + glycine. Inhibited by interaction with the S.magnifica carboxypeptidase inhibitor SmCI. Its function is as follows. Carboxypeptidase that catalyzes the release of a C-terminal amino acid, but has little or no action with -Asp, -Glu, -Arg, -Lys or -Pro. Catalyzes the conversion of leukotriene C4 to leukotriene F4 via the hydrolysis of an amide bond. This is Carboxypeptidase A1 from Homo sapiens (Human).